The chain runs to 539 residues: Putative dimethylaniline monooxygenase [N-oxide-forming] 6 (539 aa).

FAD contacts are provided by residues G9–S13, E32, L40–W41, and N61–S62. Residue S195–D198 coordinates NADP(+). Residues F518–F538 traverse the membrane as a helical segment.

This sequence belongs to the FMO family. FAD serves as cofactor.

The protein resides in the microsome membrane. It localises to the endoplasmic reticulum membrane. It catalyses the reaction N,N-dimethylaniline + NADPH + O2 + H(+) = N,N-dimethylaniline N-oxide + NADP(+) + H2O. Its function is as follows. It is probable that this protein is only produced in very small quantity or not at all as the gene coding for it seems to be unable to produce full-length transcripts. This is Putative dimethylaniline monooxygenase [N-oxide-forming] 6 (FMO6P) from Homo sapiens (Human).